The chain runs to 94 residues: Small ribosomal subunit protein bS6 (94 aa).

It belongs to the bacterial ribosomal protein bS6 family.

In terms of biological role, binds together with bS18 to 16S ribosomal RNA. The polypeptide is Small ribosomal subunit protein bS6 (Fusobacterium nucleatum subsp. nucleatum (strain ATCC 25586 / DSM 15643 / BCRC 10681 / CIP 101130 / JCM 8532 / KCTC 2640 / LMG 13131 / VPI 4355)).